Consider the following 224-residue polypeptide: Cytosolic-abundant heat soluble protein 77580 (224 aa).

Residues M1–S13 are compositionally biased toward low complexity. Residues M1–T38 are disordered. Residues Q24–T38 are compositionally biased toward basic and acidic residues. Residues V83–H191 adopt a coiled-coil conformation. CAHS motif stretches follow at residues Y122–Q140 and Q159–E177. A compositionally biased stretch (low complexity) spans A200–S215. The disordered stretch occupies residues A200–N224.

This sequence belongs to the Cytosolic-abundant heat soluble protein (CAHS) family.

The protein localises to the cytoplasm. CAHS proteins are cytosolic heat soluble proteins that seem to contribute to the anhydrobiosis in tardigrades, but their specific mechanisms are yet to be identified. It is possible that protection during anhydrobiosis might occur via the stabilization of vitrifying small molecules such as sugars, but not via the direct glass transition of CAHS proteins themselves. This is Cytosolic-abundant heat soluble protein 77580 from Hypsibius exemplaris (Freshwater tardigrade).